We begin with the raw amino-acid sequence, 227 residues long: Neuromodulin (227 aa).

Residues 1 to 227 are disordered; sequence MLCCMRRTKQ…EDPEADQEHA (227 aa). 2 S-palmitoyl cysteine lipidation sites follow: Cys-3 and Cys-4. Basic and acidic residues predominate over residues 9–32; that stretch reads KQVEKNDEDQKIEQDGVKPEDKAH. The IQ domain maps to 31-60; that stretch reads AHKAATKIQASFRGHITRKKLKGEKKGDAP. Ser-41 carries the phosphoserine; by PHK modification. Positions 54–84 are enriched in basic and acidic residues; that stretch reads EKKGDAPAAEAEAKEKDDAPVADGVEKKEGD. The span at 85–97 shows a compositional bias: low complexity; that stretch reads GSATTDAAPATSP. A phosphoserine mark is found at Ser-86 and Ser-96. Basic and acidic residues predominate over residues 98-127; sequence KAEEPSKAGDAPSEEKKGEGDAAPSEEKAG. The segment covering 128–139 has biased composition (low complexity); sequence SAETESAAKATT. Thr-138 carries the phosphothreonine modification. Residues Ser-142, Ser-144, and Ser-145 each carry the phosphoserine modification. Positions 146-158 are enriched in basic and acidic residues; sequence KAEDGPAKEEPKQ. Over residues 159-193 the composition is skewed to low complexity; that stretch reads ADVPAAVTDAAATTPAAEDAATKAAQPPTETAESS. At Thr-172 the chain carries Phosphothreonine. Phosphoserine; by CK2 is present on residues Ser-192 and Ser-193. Positions 202–215 are enriched in basic and acidic residues; sequence VDEAKPKESARQDE. Positions 216 to 227 are enriched in acidic residues; that stretch reads GKEDPEADQEHA.

It belongs to the neuromodulin family. As to quaternary structure, identified in a complex containing FGFR4, NCAM1, CDH2, PLCG1, FRS2, SRC, SHC1, GAP43 and CTTN. Interacts (via IQ domain) with calmodulin. Binds calmodulin with a greater affinity in the absence of Ca(2+) than in its presence. Phosphorylated. Phosphorylation of this protein by a protein kinase C is specifically correlated with certain forms of synaptic plasticity. In terms of processing, palmitoylated by ZDHHC3. Palmitoylation is regulated by ARF6 and is essential for plasma membrane association and axonal and dendritic filopodia induction. Deacylated by LYPLA2. As to expression, expressed in the hippocampus (at protein level). Expressed in the dorsal root ganglion and the spinal cord (at protein level).

It localises to the cell membrane. Its subcellular location is the cell projection. It is found in the growth cone membrane. The protein localises to the synapse. The protein resides in the filopodium membrane. It localises to the perikaryon. Its subcellular location is the dendrite. It is found in the axon. The protein localises to the cytoplasm. In terms of biological role, this protein is associated with nerve growth. It is a major component of the motile 'growth cones' that form the tips of elongating axons. Plays a role in axonal and dendritic filopodia induction. This Mus musculus (Mouse) protein is Neuromodulin (Gap43).